The chain runs to 337 residues: GTP 3',8-cyclase (337 aa).

Residues 17 to 242 enclose the Radical SAM core domain; it reads TFQREYYYLR…RQKDRTDGPA (226 aa). Residue R26 participates in GTP binding. Positions 33 and 37 each coordinate [4Fe-4S] cluster. Position 39 (Y39) interacts with S-adenosyl-L-methionine. C40 serves as a coordination point for [4Fe-4S] cluster. R76 serves as a coordination point for GTP. G80 is a binding site for S-adenosyl-L-methionine. T107 provides a ligand contact to GTP. S131 lines the S-adenosyl-L-methionine pocket. K168 is a GTP binding site. M202 serves as a coordination point for S-adenosyl-L-methionine. [4Fe-4S] cluster contacts are provided by C265 and C268. A GTP-binding site is contributed by 270 to 272; that stretch reads RLR. Position 282 (C282) interacts with [4Fe-4S] cluster.

Belongs to the radical SAM superfamily. MoaA family. Monomer and homodimer. Requires [4Fe-4S] cluster as cofactor.

It carries out the reaction GTP + AH2 + S-adenosyl-L-methionine = (8S)-3',8-cyclo-7,8-dihydroguanosine 5'-triphosphate + 5'-deoxyadenosine + L-methionine + A + H(+). It functions in the pathway cofactor biosynthesis; molybdopterin biosynthesis. In terms of biological role, catalyzes the cyclization of GTP to (8S)-3',8-cyclo-7,8-dihydroguanosine 5'-triphosphate. The polypeptide is GTP 3',8-cyclase (Mannheimia succiniciproducens (strain KCTC 0769BP / MBEL55E)).